Reading from the N-terminus, the 336-residue chain is tRNA N6-adenosine threonylcarbamoyltransferase (336 aa).

Positions 111 and 115 each coordinate Fe cation. Substrate is bound by residues L134 to G138, D167, G180, and N270. D298 provides a ligand contact to Fe cation.

The protein belongs to the KAE1 / TsaD family. Fe(2+) serves as cofactor.

Its subcellular location is the cytoplasm. The enzyme catalyses L-threonylcarbamoyladenylate + adenosine(37) in tRNA = N(6)-L-threonylcarbamoyladenosine(37) in tRNA + AMP + H(+). Functionally, required for the formation of a threonylcarbamoyl group on adenosine at position 37 (t(6)A37) in tRNAs that read codons beginning with adenine. Is involved in the transfer of the threonylcarbamoyl moiety of threonylcarbamoyl-AMP (TC-AMP) to the N6 group of A37, together with TsaE and TsaB. TsaD likely plays a direct catalytic role in this reaction. This is tRNA N6-adenosine threonylcarbamoyltransferase from Acinetobacter baumannii (strain AB307-0294).